Here is a 502-residue protein sequence, read N- to C-terminus: Membrane-bound lytic murein transglycosylase F (502 aa).

A signal peptide spans 1 to 33 (MSRFISTFRSSSAQLSIVLAVILATGCSQPTTL). The segment at 34–264 (QEIREEGVLH…QLAERFYGHL (231 aa)) is non-LT domain. Residues 265 to 502 (DRLNYVGART…PELRLIPPTL (238 aa)) form an LT domain region. Residue Glu311 is part of the active site. The disordered stretch occupies residues 457–502 (PSASGLEDQLAWLGDNEAGPEAPAKESQPDLRADLPPELRLIPPTL). Basic and acidic residues predominate over residues 479 to 493 (PAKESQPDLRADLPP).

It in the N-terminal section; belongs to the bacterial solute-binding protein 3 family. The protein in the C-terminal section; belongs to the transglycosylase Slt family.

It is found in the cell outer membrane. It carries out the reaction Exolytic cleavage of the (1-&gt;4)-beta-glycosidic linkage between N-acetylmuramic acid (MurNAc) and N-acetylglucosamine (GlcNAc) residues in peptidoglycan, from either the reducing or the non-reducing ends of the peptidoglycan chains, with concomitant formation of a 1,6-anhydrobond in the MurNAc residue.. Murein-degrading enzyme that degrades murein glycan strands and insoluble, high-molecular weight murein sacculi, with the concomitant formation of a 1,6-anhydromuramoyl product. Lytic transglycosylases (LTs) play an integral role in the metabolism of the peptidoglycan (PG) sacculus. Their lytic action creates space within the PG sacculus to allow for its expansion as well as for the insertion of various structures such as secretion systems and flagella. The protein is Membrane-bound lytic murein transglycosylase F of Marinobacter nauticus (strain ATCC 700491 / DSM 11845 / VT8) (Marinobacter aquaeolei).